Consider the following 178-residue polypeptide: Large ribosomal subunit protein bL19 (178 aa).

The protein belongs to the bacterial ribosomal protein bL19 family.

In terms of biological role, this protein is located at the 30S-50S ribosomal subunit interface and may play a role in the structure and function of the aminoacyl-tRNA binding site. The protein is Large ribosomal subunit protein bL19 of Rhizobium etli (strain ATCC 51251 / DSM 11541 / JCM 21823 / NBRC 15573 / CFN 42).